Consider the following 138-residue polypeptide: Small ribosomal subunit protein uS9c (138 aa).

This sequence belongs to the universal ribosomal protein uS9 family.

The protein localises to the plastid. It is found in the chloroplast. The protein is Small ribosomal subunit protein uS9c (rps9) of Phaeodactylum tricornutum (strain CCAP 1055/1).